Here is a 253-residue protein sequence, read N- to C-terminus: Triosephosphate isomerase (253 aa).

9 to 11 (NWK) is a binding site for substrate. The active-site Electrophile is the His-95. The active-site Proton acceptor is the Glu-167. Substrate contacts are provided by residues Gly-173, Ser-213, and 234–235 (GG). Ser-213 is modified (phosphoserine).

The protein belongs to the triosephosphate isomerase family. In terms of assembly, homodimer.

The protein localises to the cytoplasm. It catalyses the reaction D-glyceraldehyde 3-phosphate = dihydroxyacetone phosphate. It participates in carbohydrate biosynthesis; gluconeogenesis. The protein operates within carbohydrate degradation; glycolysis; D-glyceraldehyde 3-phosphate from glycerone phosphate: step 1/1. Functionally, involved in the gluconeogenesis. Catalyzes stereospecifically the conversion of dihydroxyacetone phosphate (DHAP) to D-glyceraldehyde-3-phosphate (G3P). The sequence is that of Triosephosphate isomerase from Geobacillus kaustophilus (strain HTA426).